Here is a 1205-residue protein sequence, read N- to C-terminus: Plasma membrane calcium-transporting ATPase 4 (1205 aa).

Residues 1-100 are Cytoplasmic-facing; it reads MTNPPGQSVS…KTFLELVWEA (100 aa). The helical transmembrane segment at 101 to 121 threads the bilayer; it reads LQDVTLIILEIAAIISLVLSF. Over 122–147 the chain is Extracellular; sequence YRPPGGDNEICGHIASSPEEEEEGET. Residues 148–168 traverse the membrane as a helical segment; that stretch reads GWIEGAAILASVIIVVLVTAF. Over 169–369 the chain is Cytoplasmic; it reads NDWSKEKQFR…LAVQIGKAGL (201 aa). The interval 294–318 is disordered; the sequence is DDDDKKKKGKKQGAPENRNKAKTQD. Phosphoserine is present on residues Ser329 and Ser335. A helical transmembrane segment spans residues 370–390; that stretch reads IMSVLTVVILILYFVVDNFVI. Topologically, residues 391 to 409 are extracellular; it reads QRREWLPECTPVYIQYFVK. The helical transmembrane segment at 410–430 threads the bilayer; sequence FFIIGVTVLVVAVPEGLPLAV. The Cytoplasmic segment spans residues 431–844; that stretch reads TISLAYSVKK…RNVYDSISKF (414 aa). The active-site 4-aspartylphosphate intermediate is Asp466. The Mg(2+) site is built by Asp786 and Asp790. Residues 845 to 865 traverse the membrane as a helical segment; it reads LQFQLTVNVVAVIVAFTGACI. Residues 866-872 lie on the Extracellular side of the membrane; sequence TQDSPLK. Residues 873 to 893 traverse the membrane as a helical segment; it reads AVQMLWVNLIMDTFASLALAT. At 894-919 the chain is on the cytoplasmic side; it reads EPPTESLLRRRPYGRNKPLISRTMMK. A helical membrane pass occupies residues 920–942; that stretch reads NILGHAVYQLLIVFLLVFAGDTL. Residues 943–956 lie on the Extracellular side of the membrane; it reads FDIDSGRKAPLNSP. Residues 957–979 form a helical membrane-spanning segment; that stretch reads PSQHYTIVFNTFVLMQLFNEINA. Over 980–995 the chain is Cytoplasmic; that stretch reads RKIHGEKNVFAGVYRN. Residues 996 to 1016 form a helical membrane-spanning segment; it reads IIFCTVVLGTFFCQIMIVELG. Topologically, residues 1017–1029 are extracellular; that stretch reads GKPFSCTSLTMEQ. A helical transmembrane segment spans residues 1030 to 1050; it reads WMWCLFIGIGELLWGQVISAI. The Cytoplasmic segment spans residues 1051–1205; that stretch reads PTKSLKFLKE…SPLPSLETPV (155 aa). Phosphoserine is present on residues Ser1065 and Ser1071. Arg1072 carries the post-translational modification Omega-N-methylarginine. Residues 1087 to 1104 form a calmodulin-binding subdomain A region; the sequence is LRRGQILWVRGLNRIQTQ. Thr1103 carries the phosphothreonine; by PKC modification. The segment at 1105-1114 is calmodulin-binding subdomain B; the sequence is IRVVKLFHNN. Position 1145 is a phosphoserine (Ser1145).

This sequence belongs to the cation transport ATPase (P-type) (TC 3.A.3) family. Type IIB subfamily. In terms of assembly, interacts with PDZD11. Interacts with SLC35G1 and STIM1. Interacts with calmodulin. As to expression, specifically expressed by sperm in testis (at protein level).

The protein resides in the membrane. Its subcellular location is the cell projection. The protein localises to the cilium. It localises to the flagellum membrane. The catalysed reaction is Ca(2+)(in) + ATP + H2O = Ca(2+)(out) + ADP + phosphate + H(+). With respect to regulation, activated by calcium/calmodulin. In terms of biological role, calcium/calmodulin-regulated and magnesium-dependent enzyme that catalyzes the hydrolysis of ATP coupled with the transport of calcium out of the cell. By regulating sperm cell calcium homeostasis, may play a role in sperm motility. The polypeptide is Plasma membrane calcium-transporting ATPase 4 (Mus musculus (Mouse)).